Reading from the N-terminus, the 207-residue chain is uncharacterized protein (207 aa).

Residues 1–19 (MRHGLLALICWLCCVVAHS) form the signal peptide.

It to P.aeruginosa PA4490 and T.maritima TM0986.

This is an uncharacterized protein from Escherichia coli (strain K12).